Here is a 388-residue protein sequence, read N- to C-terminus: 8-amino-7-oxononanoate synthase (388 aa).

R20 is a substrate binding site. 107 to 108 (GY) serves as a coordination point for pyridoxal 5'-phosphate. H132 is a substrate binding site. Pyridoxal 5'-phosphate contacts are provided by S178, H206, and T237. K240 carries the N6-(pyridoxal phosphate)lysine modification. T356 contributes to the substrate binding site.

Belongs to the class-II pyridoxal-phosphate-dependent aminotransferase family. BioF subfamily. In terms of assembly, homodimer. The cofactor is pyridoxal 5'-phosphate.

The enzyme catalyses 6-carboxyhexanoyl-[ACP] + L-alanine + H(+) = (8S)-8-amino-7-oxononanoate + holo-[ACP] + CO2. Its pathway is cofactor biosynthesis; biotin biosynthesis. Functionally, catalyzes the decarboxylative condensation of pimeloyl-[acyl-carrier protein] and L-alanine to produce 8-amino-7-oxononanoate (AON), [acyl-carrier protein], and carbon dioxide. This chain is 8-amino-7-oxononanoate synthase, found in Herminiimonas arsenicoxydans.